The chain runs to 165 residues: Type 3 secretion system regulator YopR (165 aa).

The 5' secretion signal stretch occupies residues 2 to 11; it reads TVTLNRGSIT. Residues 131–149 are 3' secretion signal; that stretch reads PYLSELINKELMILLPYNS.

Belongs to the YopR family.

The protein resides in the secreted. May be involved in the regulation of the assembly of the type III secretion system (T3SS), also called injectisome, which is used to inject bacterial effector proteins into eukaryotic host cells. May control the secretion and/or polymerization of YscF/SctF, the principal component of the needle filament, thereby impacting the assembly of the T3SS. Involved in pathogenesis. Essential for the establishment of Yersinia infections in a mouse model system. This chain is Type 3 secretion system regulator YopR, found in Yersinia enterocolitica.